We begin with the raw amino-acid sequence, 470 residues long: Argininosuccinate lyase (470 aa).

Belongs to the lyase 1 family. Argininosuccinate lyase subfamily.

Its subcellular location is the cytoplasm. It carries out the reaction 2-(N(omega)-L-arginino)succinate = fumarate + L-arginine. Its pathway is amino-acid biosynthesis; L-arginine biosynthesis; L-arginine from L-ornithine and carbamoyl phosphate: step 3/3. The protein is Argininosuccinate lyase of Leptospira borgpetersenii serovar Hardjo-bovis (strain L550).